A 719-amino-acid polypeptide reads, in one-letter code: Phosphoribosylformylglycinamidine synthase subunit PurL (719 aa).

Residue histidine 47 is part of the active site. ATP contacts are provided by tyrosine 50 and lysine 89. Glutamate 91 contacts Mg(2+). Substrate contacts are provided by residues 92–95 and arginine 114; that span reads SHNH. The active-site Proton acceptor is histidine 93. Aspartate 115 serves as a coordination point for Mg(2+). Glutamine 238 lines the substrate pocket. Mg(2+) is bound at residue aspartate 266. 310–312 lines the substrate pocket; it reads ESQ. Residues aspartate 488 and glycine 525 each contribute to the ATP site. Asparagine 526 lines the Mg(2+) pocket. Residue serine 528 coordinates substrate.

This sequence belongs to the FGAMS family. In terms of assembly, monomer. Part of the FGAM synthase complex composed of 1 PurL, 1 PurQ and 2 PurS subunits.

It is found in the cytoplasm. It carries out the reaction N(2)-formyl-N(1)-(5-phospho-beta-D-ribosyl)glycinamide + L-glutamine + ATP + H2O = 2-formamido-N(1)-(5-O-phospho-beta-D-ribosyl)acetamidine + L-glutamate + ADP + phosphate + H(+). It participates in purine metabolism; IMP biosynthesis via de novo pathway; 5-amino-1-(5-phospho-D-ribosyl)imidazole from N(2)-formyl-N(1)-(5-phospho-D-ribosyl)glycinamide: step 1/2. Its function is as follows. Part of the phosphoribosylformylglycinamidine synthase complex involved in the purines biosynthetic pathway. Catalyzes the ATP-dependent conversion of formylglycinamide ribonucleotide (FGAR) and glutamine to yield formylglycinamidine ribonucleotide (FGAM) and glutamate. The FGAM synthase complex is composed of three subunits. PurQ produces an ammonia molecule by converting glutamine to glutamate. PurL transfers the ammonia molecule to FGAR to form FGAM in an ATP-dependent manner. PurS interacts with PurQ and PurL and is thought to assist in the transfer of the ammonia molecule from PurQ to PurL. The polypeptide is Phosphoribosylformylglycinamidine synthase subunit PurL (Roseobacter denitrificans (strain ATCC 33942 / OCh 114) (Erythrobacter sp. (strain OCh 114))).